The chain runs to 486 residues: CREB-regulated transcription coactivator 1 homolog (486 aa).

The tract at residues 1–62 is disordered; it reads MSNSNTPRKF…APMPIPQQGL (62 aa). Positions 9 to 23 are enriched in basic and acidic residues; the sequence is KFSEKIAILERKQNE. Residues 34-52 are compositionally biased toward polar residues; it reads QVQSITHHPTDSSGSSTAT. Ser-76 bears the Phosphoserine; by AMPK mark. The disordered stretch occupies residues 103 to 166; it reads PIQGHRSRSP…PPYNQPGQLV (64 aa). A compositionally biased stretch (pro residues) spans 144 to 160; it reads RTPPQHPQYTPYGPPYN. At Ser-179 the chain carries Phosphoserine; by AMPK. Disordered regions lie at residues 214–278, 327–417, and 460–486; these read SMPG…QSPN, FNQD…SNSP, and APPQTISNHQTPNNSFHDPGGTQMLQN. Composition is skewed to polar residues over residues 224 to 245, 387 to 402, and 461 to 475; these read PNSQSQQHSPQLTPQGSQQGSP, PESQSAPTSPHNQLDP, and PPQTISNHQTPNNSF.

The protein belongs to the TORC family. Interacts with crh-1. Phosphorylated by AMPK at Ser-76 and Ser-179. Dephosphorylated by tax-6, the catalytic subunit of calcineurin. As to expression, expressed throughout the intestine and in head and tail neurons. Expressed in octopaminergic RIC neurons.

Its subcellular location is the nucleus. It is found in the cytoplasm. The protein resides in the cytosol. Functionally, transcriptional coactivator for crh-1, the homolog of vertebrate transcription factor CREB1. Regulates the transcription of metabolic genes and may have a role in mitochondrial dynamics and metabolism. Involved in modulation of lifespan. Through crh-1, counteracts the pro-lifespan-extension signals of AMPK both cell autonomously and, when expressed in neurons, at a systemic level, possibly using the catecholamine analog, octopamine, as a messenger. The protein is CREB-regulated transcription coactivator 1 homolog of Caenorhabditis elegans.